A 235-amino-acid polypeptide reads, in one-letter code: MSKQLIYSGKAKDIYTTEDENLIISTYKDQATAFNGVKKEQIAGKGVLNNQISSFIFEKLNVAGVATHFVEKLSDTEQLNKKVKIIPLEVVLRNYTAGSFSKRFGVDEGIALETPIVEFYYKNDDLDDPFINDEHVKFLQIAGDQQIAYLKEETRRINELLKVWFAEIGLKLIDFKLEFGFDKDGKIILADEFSPDNCRLWDADGNHMDKDVFRRGLGELTDVYEIVWEKLQGLK.

Belongs to the SAICAR synthetase family.

It catalyses the reaction 5-amino-1-(5-phospho-D-ribosyl)imidazole-4-carboxylate + L-aspartate + ATP = (2S)-2-[5-amino-1-(5-phospho-beta-D-ribosyl)imidazole-4-carboxamido]succinate + ADP + phosphate + 2 H(+). The protein operates within purine metabolism; IMP biosynthesis via de novo pathway; 5-amino-1-(5-phospho-D-ribosyl)imidazole-4-carboxamide from 5-amino-1-(5-phospho-D-ribosyl)imidazole-4-carboxylate: step 1/2. This Streptococcus pneumoniae (strain ATCC 700669 / Spain 23F-1) protein is Phosphoribosylaminoimidazole-succinocarboxamide synthase.